Consider the following 213-residue polypeptide: ATP-dependent dethiobiotin synthetase BioD (213 aa).

12–17 (EVGKTY) contacts ATP. Position 16 (threonine 16) interacts with Mg(2+). Lysine 37 is an active-site residue. ATP-binding positions include aspartate 46, 107-110 (EGVG), and 167-168 (NN). Positions 46 and 107 each coordinate Mg(2+).

It belongs to the dethiobiotin synthetase family. Homodimer. Requires Mg(2+) as cofactor.

The protein localises to the cytoplasm. It catalyses the reaction (7R,8S)-7,8-diammoniononanoate + CO2 + ATP = (4R,5S)-dethiobiotin + ADP + phosphate + 3 H(+). The protein operates within cofactor biosynthesis; biotin biosynthesis; biotin from 7,8-diaminononanoate: step 1/2. Its function is as follows. Catalyzes a mechanistically unusual reaction, the ATP-dependent insertion of CO2 between the N7 and N8 nitrogen atoms of 7,8-diaminopelargonic acid (DAPA, also called 7,8-diammoniononanoate) to form a ureido ring. The polypeptide is ATP-dependent dethiobiotin synthetase BioD (Akkermansia muciniphila (strain ATCC BAA-835 / DSM 22959 / JCM 33894 / BCRC 81048 / CCUG 64013 / CIP 107961 / Muc)).